A 293-amino-acid chain; its full sequence is ATP synthase subunit a (293 aa).

6 helical membrane passes run 40-60 (DSLFWSILMGLLVVFCLWLAA), 97-117 (LFVAPLALTVFLWIILMNALD), 151-171 (DLNVPMGMSLGVLLLMFYYGI), 188-208 (FHAHGLASLVLAPFNLLLNLI), 225-245 (MFAGELIFMLIALLGGAWTGF), and 264-284 (AIFHILIVLLQAFIFMMLTLV).

Belongs to the ATPase A chain family. As to quaternary structure, F-type ATPases have 2 components, CF(1) - the catalytic core - and CF(0) - the membrane proton channel. CF(1) has five subunits: alpha(3), beta(3), gamma(1), delta(1), epsilon(1). CF(0) has three main subunits: a(1), b(2) and c(9-12). The alpha and beta chains form an alternating ring which encloses part of the gamma chain. CF(1) is attached to CF(0) by a central stalk formed by the gamma and epsilon chains, while a peripheral stalk is formed by the delta and b chains.

Its subcellular location is the cell inner membrane. In terms of biological role, key component of the proton channel; it plays a direct role in the translocation of protons across the membrane. The chain is ATP synthase subunit a from Bordetella bronchiseptica (strain ATCC BAA-588 / NCTC 13252 / RB50) (Alcaligenes bronchisepticus).